Consider the following 261-residue polypeptide: Basic leucine zipper 19 (261 aa).

2 disordered regions span residues M1–L22 and E74–R100. The segment covering F8–E18 has biased composition (polar residues). Residues C88–R100 are compositionally biased toward basic and acidic residues. The region spanning G89–L155 is the bZIP domain. Residues K90–K113 form a basic motif region. The segment at L117–L131 is leucine-zipper. Low complexity predominate over residues N237–S248. The tract at residues N237–V261 is disordered. The segment covering N249 to V261 has biased composition (basic residues).

Its subcellular location is the nucleus. Functionally, transcription factor involved in the response to zinc ion deficiency. Binds to the consensus sequence 5'-[AG]TGTCGACA[CT]-3' also called zinc deficiency response element (ZDRE). The ZDRE sequence is conserved in the plant kingdom and present in the promoters of genes that constitute the primary response to zinc deficiency, comprising additional ZIP metal transporter genes. Required for zinc accumulation in roots. Mediates the expression of the zinc transporters ZIP3, ZIP4, ZIP5 and ZIP9 during growth in zinc-deficient conditions. ZIP9 transporter is involved in zinc uptake in roots. The protein is Basic leucine zipper 19 of Arabidopsis thaliana (Mouse-ear cress).